Reading from the N-terminus, the 335-residue chain is Ketol-acid reductoisomerase (NADP(+)) (335 aa).

Residues 1–182 (MATIIYDNET…GATRAGVYET (182 aa)) enclose the KARI N-terminal Rossmann domain. Residues 25–28 (YGSQ), arginine 48, serine 51, serine 53, and 83–86 (DEKQ) each bind NADP(+). Histidine 108 is an active-site residue. Glycine 134 serves as a coordination point for NADP(+). A KARI C-terminal knotted domain is found at 183–328 (TFREETETDL…KEIRANIPWL (146 aa)). The Mg(2+) site is built by aspartate 191, glutamate 195, glutamate 227, and glutamate 231. Substrate is bound at residue serine 252.

It belongs to the ketol-acid reductoisomerase family. It depends on Mg(2+) as a cofactor.

It catalyses the reaction (2R)-2,3-dihydroxy-3-methylbutanoate + NADP(+) = (2S)-2-acetolactate + NADPH + H(+). The enzyme catalyses (2R,3R)-2,3-dihydroxy-3-methylpentanoate + NADP(+) = (S)-2-ethyl-2-hydroxy-3-oxobutanoate + NADPH + H(+). It participates in amino-acid biosynthesis; L-isoleucine biosynthesis; L-isoleucine from 2-oxobutanoate: step 2/4. Its pathway is amino-acid biosynthesis; L-valine biosynthesis; L-valine from pyruvate: step 2/4. In terms of biological role, involved in the biosynthesis of branched-chain amino acids (BCAA). Catalyzes an alkyl-migration followed by a ketol-acid reduction of (S)-2-acetolactate (S2AL) to yield (R)-2,3-dihydroxy-isovalerate. In the isomerase reaction, S2AL is rearranged via a Mg-dependent methyl migration to produce 3-hydroxy-3-methyl-2-ketobutyrate (HMKB). In the reductase reaction, this 2-ketoacid undergoes a metal-dependent reduction by NADPH to yield (R)-2,3-dihydroxy-isovalerate. The polypeptide is Ketol-acid reductoisomerase (NADP(+)) (Methanosarcina acetivorans (strain ATCC 35395 / DSM 2834 / JCM 12185 / C2A)).